Reading from the N-terminus, the 368-residue chain is Phosphoserine aminotransferase (368 aa).

Arg44 contacts L-glutamate. Pyridoxal 5'-phosphate contacts are provided by residues 78 to 79 (AT), Trp104, Thr157, Asp179, and Gln202. Lys203 bears the N6-(pyridoxal phosphate)lysine mark. 244-245 (NT) provides a ligand contact to pyridoxal 5'-phosphate.

This sequence belongs to the class-V pyridoxal-phosphate-dependent aminotransferase family. SerC subfamily. As to quaternary structure, homodimer. The cofactor is pyridoxal 5'-phosphate.

It is found in the cytoplasm. It carries out the reaction O-phospho-L-serine + 2-oxoglutarate = 3-phosphooxypyruvate + L-glutamate. The enzyme catalyses 4-(phosphooxy)-L-threonine + 2-oxoglutarate = (R)-3-hydroxy-2-oxo-4-phosphooxybutanoate + L-glutamate. The protein operates within amino-acid biosynthesis; L-serine biosynthesis; L-serine from 3-phospho-D-glycerate: step 2/3. Its pathway is cofactor biosynthesis; pyridoxine 5'-phosphate biosynthesis; pyridoxine 5'-phosphate from D-erythrose 4-phosphate: step 3/5. In terms of biological role, catalyzes the reversible conversion of 3-phosphohydroxypyruvate to phosphoserine and of 3-hydroxy-2-oxo-4-phosphonooxybutanoate to phosphohydroxythreonine. The protein is Phosphoserine aminotransferase of Neisseria meningitidis serogroup A / serotype 4A (strain DSM 15465 / Z2491).